Here is a 318-residue protein sequence, read N- to C-terminus: Quinolinate synthase (318 aa).

2 residues coordinate iminosuccinate: His34 and Ser51. Cys96 contributes to the [4Fe-4S] cluster binding site. Residues 122-124 (YIN) and Ser139 each bind iminosuccinate. Cys182 is a binding site for [4Fe-4S] cluster. Residues 208-210 (HPE) and Thr225 each bind iminosuccinate. A [4Fe-4S] cluster-binding site is contributed by Cys275.

It belongs to the quinolinate synthase family. Type 2 subfamily. Requires [4Fe-4S] cluster as cofactor.

The protein localises to the cytoplasm. The enzyme catalyses iminosuccinate + dihydroxyacetone phosphate = quinolinate + phosphate + 2 H2O + H(+). It participates in cofactor biosynthesis; NAD(+) biosynthesis; quinolinate from iminoaspartate: step 1/1. In terms of biological role, catalyzes the condensation of iminoaspartate with dihydroxyacetone phosphate to form quinolinate. This Synechocystis sp. (strain ATCC 27184 / PCC 6803 / Kazusa) protein is Quinolinate synthase.